We begin with the raw amino-acid sequence, 213 residues long: uncharacterized protein (213 aa).

Helical transmembrane passes span 26-46 (FINF…GLKV), 112-132 (ASYI…AGIW), and 136-156 (AGLA…SFLI).

The protein resides in the cell membrane. This is an uncharacterized protein from Haemophilus influenzae (strain ATCC 51907 / DSM 11121 / KW20 / Rd).